Here is a 1334-residue protein sequence, read N- to C-terminus: Adenylate cyclase type 9 (1334 aa).

Disordered stretches follow at residues Met1–Val28 and Ile49–Arg71. At Met1–Arg113 the chain is on the cytoplasmic side. Positions Glu16 to Val28 are enriched in polar residues. Over residues Glu57–Leu69 the composition is skewed to gly residues. The chain crosses the membrane as a helical span at residues Tyr114–Met134. Residues Arg135 to Lys137 are Extracellular-facing. A helical membrane pass occupies residues Gln138–Phe158. At Thr159–Arg167 the chain is on the cytoplasmic side. A helical membrane pass occupies residues Tyr168–Phe187. The Extracellular portion of the chain corresponds to Gln188–Asp207. A helical transmembrane segment spans residues Thr208–Tyr227. Topologically, residues Thr228–Pro233 are cytoplasmic. A helical membrane pass occupies residues Leu234–Thr250. At Ser251 to Glu269 the chain is on the extracellular side. The helical transmembrane segment at Leu270–Met290 threads the bilayer. Over Ser291–Ser768 the chain is Cytoplasmic. A disordered region spans residues Gln338 to Ser363. The span at Lys348–Ser363 shows a compositional bias: basic residues. Residues Asp388, Ile389, and Asp432 each contribute to the Mg(2+) site. ATP is bound by residues Asp388–Thr393, Leu430–Asp432, and Arg476. A disordered region spans residues Gly635–Ser670. Residues Ser769–Leu789 traverse the membrane as a helical segment. Topologically, residues Lys790 to Pro800 are extracellular. A helical transmembrane segment spans residues Ala801–Val821. At Arg822–Phe849 the chain is on the cytoplasmic side. A helical transmembrane segment spans residues Leu850–Phe870. Over Glu871–Asn873 the chain is Extracellular. The helical transmembrane segment at Ile874–Phe894 threads the bilayer. Residues Cys895–Arg902 are Cytoplasmic-facing. A helical transmembrane segment spans residues Ser903–Pro923. The Extracellular segment spans residues Asp924–Ala957. N-linked (GlcNAc...) asparagine glycosylation is found at Asn937 and Asn946. The chain crosses the membrane as a helical span at residues Asp958–Leu978. Topologically, residues Asn979–Val1334 are cytoplasmic. ATP is bound by residues Lys1090, Asp1167 to Trp1169, Asn1174 to Arg1178, and Lys1214. The disordered stretch occupies residues Ser1266 to Cys1303. 2 stretches are compositionally biased toward basic and acidic residues: residues Lys1272–Asp1284 and Leu1292–Cys1303.

Belongs to the adenylyl cyclase class-4/guanylyl cyclase family. It depends on Mg(2+) as a cofactor. Mn(2+) serves as cofactor. In terms of tissue distribution, detected in embryonic heart (at protein level).

The protein resides in the cell membrane. Its subcellular location is the membrane. It carries out the reaction ATP = 3',5'-cyclic AMP + diphosphate. Its activity is regulated as follows. Insensitive to calcium/calmodulin, forskolin and somatostatin. Stimulated by beta-adrenergic receptor activation. Activity is down-regulated by calcium/calcineurin. Adenylyl cyclase that catalyzes the formation of the signaling molecule cAMP in response to activation of G protein-coupled receptors. The polypeptide is Adenylate cyclase type 9 (ADCY9) (Gallus gallus (Chicken)).